The primary structure comprises 333 residues: Gramillins biosynthetic cluster protein FGSG_00039 (333 aa).

The protein operates within mycotoxin biosynthesis. Its function is as follows. Part of the gene cluster that mediates the biosynthesis of gramillins A and B, bicyclic lipopeptides that induce cell death in maize leaves but not in wheat leaves. The nonribosomal peptide synthetase GRA1 incorporates respectively a glutamic adic (Glu), a leucine (Leu), a serine (Ser), a hydroxyglutamine (HOGln), a 2-amino decanoic acid, and 2 cysteins (CysB and CysA). The biosynthesis of 2-amino decanoic acid incorporated in gramillins could be initiated by a fatty acid synthase composed of the alpha and beta subunits FGSG_00036 and FGSG_11656. The cytochrome P450 monooxygenase FGSG_15680 could hydroxylate the fatty acid chain. Subsequent oxidation to the ketone by the oxidoreductase FGSG_00048 and transamination by aminotransferase FGSG_00049 could form 2-amino-decanoic acid. On the other hand, FGSG_15680 could also be responsible for the HO-modified glutamine at the gamma-position. Whether hydroxylation occurs on the fully assembled product or on the Gln residue prior to assembly into the gramillins requires further proof. The thioredoxin FGSG_00043 could also be required for the disulfide-bond formation between CysA and CysB. The specific involvement of the remaining proteins from the cluster is more difficult to discern, but could have broader regulatory (FGSG_00040 and FGSG_11657) or enzymatic functions (FGSG_00044 and FGSG_00045). The final C-domain of GRA1 does not possess the expected sequence of a termination CT domain, often implicated in macrocyclization and release of a cyclopeptidein fungal NRPs; and the thioesterase FGSG_00047 may act in concert with the terminal C-domain of GRA1 to catalyze the formation of the macrocyclic anhydride and release of the products. The chain is Gramillins biosynthetic cluster protein FGSG_00039 from Gibberella zeae (strain ATCC MYA-4620 / CBS 123657 / FGSC 9075 / NRRL 31084 / PH-1) (Wheat head blight fungus).